The chain runs to 296 residues: Myozenin-1 (296 aa).

At S82 the chain carries Phosphoserine. Composition is skewed to gly residues over residues 105–117 and 134–170; these read FSYG…GQAG and SGFG…QAGG. The segment at 105-172 is disordered; the sequence is FSYGKGSSGG…GSGDQAGGDG (68 aa).

The protein belongs to the myozenin family. In terms of assembly, interacts with ACTN2, ACTN3, FLNA, FLNB, FLNC, LDB3, PPP3CA and TCAP. Interacts via its C-terminal region with MYOT. As to expression, expressed primarily in skeletal muscle and specifically enriched in the gastrocnemius, which is composed predominantly of fast-twitch muscle fibers. Detected at lower levels in heart.

Its subcellular location is the nucleus. The protein localises to the cell projection. The protein resides in the pseudopodium. Functionally, myozenins may serve as intracellular binding proteins involved in linking Z-disk proteins such as alpha-actinin, gamma-filamin, TCAP/telethonin, LDB3/ZASP and localizing calcineurin signaling to the sarcomere. Plays an important role in the modulation of calcineurin signaling. May play a role in myofibrillogenesis. This chain is Myozenin-1, found in Mus musculus (Mouse).